The following is a 363-amino-acid chain: Pyrimidine monooxygenase RutA (363 aa).

FMN is bound by residues Ile49–Lys50, Asn115, Glu124, Arg140–Tyr141, and Ser190.

It belongs to the NtaA/SnaA/DszA monooxygenase family. RutA subfamily.

The enzyme catalyses uracil + FMNH2 + NADH + O2 = (Z)-3-ureidoacrylate + FMN + NAD(+) + H2O + H(+). It carries out the reaction thymine + FMNH2 + NADH + O2 = (Z)-2-methylureidoacrylate + FMN + NAD(+) + H2O + H(+). Its function is as follows. Catalyzes the pyrimidine ring opening between N-3 and C-4 by an unusual flavin hydroperoxide-catalyzed mechanism, adding oxygen atoms in the process to yield ureidoacrylate peracid, that immediately reacts with FMN forming ureidoacrylate and FMN-N(5)-oxide. The FMN-N(5)-oxide reacts spontaneously with NADH to produce FMN. Requires the flavin reductase RutF to regenerate FMN in vivo. The sequence is that of Pyrimidine monooxygenase RutA from Escherichia coli O44:H18 (strain 042 / EAEC).